Reading from the N-terminus, the 266-residue chain is Ribonuclease 3 (266 aa).

One can recognise an RNase III domain in the interval 8-130 (LARLTKKLGY…IIGAVYLDSN (123 aa)). E43 lines the Mg(2+) pocket. D47 is an active-site residue. Mg(2+) is bound by residues D116 and E119. E119 is an active-site residue. Residues 157-227 (DPKTRLQEFL…AQQILALIEK (71 aa)) enclose the DRBM domain. The segment at 229–266 (REQEKEVKIKPTKQAKLANPRHTKSNPSSSSKKSSTRK) is disordered. Over residues 253–266 (SNPSSSSKKSSTRK) the composition is skewed to low complexity.

Belongs to the ribonuclease III family. Homodimer. Mg(2+) is required as a cofactor.

The protein resides in the cytoplasm. The enzyme catalyses Endonucleolytic cleavage to 5'-phosphomonoester.. In terms of biological role, digests double-stranded RNA. Involved in the processing of primary rRNA transcript to yield the immediate precursors to the large and small rRNAs (23S and 16S). Processes some mRNAs, and tRNAs when they are encoded in the rRNA operon. Processes pre-crRNA and tracrRNA of type II CRISPR loci if present in the organism. The sequence is that of Ribonuclease 3 from Colwellia psychrerythraea (strain 34H / ATCC BAA-681) (Vibrio psychroerythus).